The chain runs to 292 residues: Cytidine deaminase (292 aa).

CMP/dCMP-type deaminase domains are found at residues 47-167 and 186-292; these read TPLK…FGPK and DHQD…YYSL. Substrate is bound at residue 88 to 90; the sequence is NQE. Zn(2+) is bound at residue His101. The active-site Proton donor is Glu103. The Zn(2+) site is built by Cys128 and Cys131.

It belongs to the cytidine and deoxycytidylate deaminase family. In terms of assembly, homodimer. It depends on Zn(2+) as a cofactor.

The catalysed reaction is cytidine + H2O + H(+) = uridine + NH4(+). It carries out the reaction 2'-deoxycytidine + H2O + H(+) = 2'-deoxyuridine + NH4(+). This enzyme scavenges exogenous and endogenous cytidine and 2'-deoxycytidine for UMP synthesis. The chain is Cytidine deaminase from Haemophilus influenzae (strain 86-028NP).